The sequence spans 779 residues: uncharacterized protein (779 aa).

Ser-97 and Ser-120 each carry phosphoserine. Positions 125–135 (EIDGEDEKKSV) are enriched in basic and acidic residues. Residues 125–174 (EIDGEDEKKSVGQESITGSAKRKDRRSKTNGSKRQKAEANREPPSDISLS) form a disordered region. Basic residues predominate over residues 144 to 158 (AKRKDRRSKTNGSKR). Over residues 159–168 (QKAEANREPP) the composition is skewed to basic and acidic residues. ATP-binding positions include 215–222 (GPPGCGKT) and 533–540 (GPPGCGKT). A disordered region spans residues 759–779 (DRQKYQRLAKRWSSASTNDAD).

This sequence belongs to the AAA ATPase family.

The protein resides in the nucleus. This is an uncharacterized protein from Schizosaccharomyces pombe (strain 972 / ATCC 24843) (Fission yeast).